We begin with the raw amino-acid sequence, 143 residues long: 3-hydroxyacyl-[acyl-carrier-protein] dehydratase FabZ (143 aa).

Residue histidine 49 is part of the active site.

Belongs to the thioester dehydratase family. FabZ subfamily.

The protein localises to the cytoplasm. It carries out the reaction a (3R)-hydroxyacyl-[ACP] = a (2E)-enoyl-[ACP] + H2O. Functionally, involved in unsaturated fatty acids biosynthesis. Catalyzes the dehydration of short chain beta-hydroxyacyl-ACPs and long chain saturated and unsaturated beta-hydroxyacyl-ACPs. The polypeptide is 3-hydroxyacyl-[acyl-carrier-protein] dehydratase FabZ (Wolbachia sp. subsp. Drosophila simulans (strain wRi)).